The primary structure comprises 288 residues: Probable sulfate transport system permease protein cysT (288 aa).

7 helical membrane passes run 28 to 48 (FLLIAALHYGILILFLPVTAL), 77 to 97 (FLTAALAAVINAFLGLILAWI), 111 to 131 (AAVDLPFALPTSVGGLTLMTV), 149 to 169 (IAFSRLGVLIAMMFVSLPFIV), 198 to 218 (FWNVLFPPMISPLLTGTALGF), 227 to 247 (SIVLVASNIPMKDLVVSVLIF), and 261 to 281 (IASVVLLVSFAILLIINYIYL). The region spanning 73 to 276 (YKVTFLTAAL…LVSFAILLII (204 aa)) is the ABC transmembrane type-1 domain.

The protein belongs to the binding-protein-dependent transport system permease family. CysTW subfamily.

It is found in the plastid. It localises to the chloroplast membrane. Functionally, part of the ABC transporter complex cysAWTP (TC 3.A.1.6.1) involved in sulfate/thiosulfate import. Probably responsible for the translocation of the substrate across the membrane. This is Probable sulfate transport system permease protein cysT (cysT) from Zygnema circumcarinatum (Green alga).